The primary structure comprises 293 residues: L-ornithine N(alpha)-acyltransferase (293 aa).

Belongs to the acetyltransferase family. OlsB subfamily.

The enzyme catalyses a (3R)-hydroxyacyl-[ACP] + L-ornithine = a lyso-ornithine lipid + holo-[ACP] + H(+). It functions in the pathway lipid metabolism. In terms of biological role, catalyzes the first step in the biosynthesis of ornithine lipids, which are phosphorus-free membrane lipids. Catalyzes the 3-hydroxyacyl-acyl carrier protein-dependent acylation of ornithine to form lyso-ornithine lipid (LOL). The chain is L-ornithine N(alpha)-acyltransferase from Agrobacterium fabrum (strain C58 / ATCC 33970) (Agrobacterium tumefaciens (strain C58)).